Reading from the N-terminus, the 327-residue chain is Phenylalanine--tRNA ligase alpha subunit (327 aa).

Mg(2+) is bound at residue Glu-252.

Belongs to the class-II aminoacyl-tRNA synthetase family. Phe-tRNA synthetase alpha subunit type 1 subfamily. As to quaternary structure, tetramer of two alpha and two beta subunits. Requires Mg(2+) as cofactor.

Its subcellular location is the cytoplasm. The catalysed reaction is tRNA(Phe) + L-phenylalanine + ATP = L-phenylalanyl-tRNA(Phe) + AMP + diphosphate + H(+). In Yersinia enterocolitica serotype O:8 / biotype 1B (strain NCTC 13174 / 8081), this protein is Phenylalanine--tRNA ligase alpha subunit.